The primary structure comprises 65 residues: Myotoxin-1 (65 aa).

The N-terminal stretch at 1–22 is a signal peptide; that stretch reads MKILYLLFAFLFLAFLSEPGNA. Intrachain disulfides connect Cys-26–Cys-58, Cys-33–Cys-52, and Cys-40–Cys-59.

This sequence belongs to the crotamine-myotoxin family. Monomer. In terms of tissue distribution, expressed by the venom gland.

The protein resides in the secreted. In terms of biological role, cationic peptide that possesses multiple functions. It acts as a cell-penetrating peptide (CPP), and as a potent voltage-gated potassium channel (Kv) inhibitor. It exhibits antimicrobial activities, hind limb paralysis, and severe muscle necrosis by a non-enzymatic mechanism. This Crotalus durissus terrificus (South American rattlesnake) protein is Myotoxin-1.